Reading from the N-terminus, the 186-residue chain is Lipoprotein signal peptidase (186 aa).

3 consecutive transmembrane segments (helical) span residues 11–31, 44–64, and 70–90; these read WIPL…KLLV, VLGD…FSIG, and VLRT…IVFS. Active-site residues include Asp128 and Asp150. Residues 145–165 form a helical membrane-spanning segment; that stretch reads AFNIADAVIMTCGLLLIISFI.

It belongs to the peptidase A8 family.

It is found in the cell inner membrane. It catalyses the reaction Release of signal peptides from bacterial membrane prolipoproteins. Hydrolyzes -Xaa-Yaa-Zaa-|-(S,diacylglyceryl)Cys-, in which Xaa is hydrophobic (preferably Leu), and Yaa (Ala or Ser) and Zaa (Gly or Ala) have small, neutral side chains.. It functions in the pathway protein modification; lipoprotein biosynthesis (signal peptide cleavage). This protein specifically catalyzes the removal of signal peptides from prolipoproteins. The sequence is that of Lipoprotein signal peptidase from Treponema pallidum (strain Nichols).